The following is a 117-amino-acid chain: Basic phospholipase A2 pseudexin A chain (117 aa).

7 disulfide bridges follow: Cys11–Cys71, Cys27–Cys117, Cys29–Cys45, Cys44–Cys98, Cys51–Cys91, Cys60–Cys84, and Cys78–Cys89. 3 residues coordinate Ca(2+): Tyr28, Gly30, and Gly32. His48 is a catalytic residue. Residue Asp49 coordinates Ca(2+). Asp92 is a catalytic residue.

The protein belongs to the phospholipase A2 family. Group I subfamily. D49 sub-subfamily. Ca(2+) is required as a cofactor. In terms of tissue distribution, expressed by the venom gland.

The protein localises to the secreted. It catalyses the reaction a 1,2-diacyl-sn-glycero-3-phosphocholine + H2O = a 1-acyl-sn-glycero-3-phosphocholine + a fatty acid + H(+). Functionally, PLA2 catalyzes the calcium-dependent hydrolysis of the 2-acyl groups in 3-sn-phosphoglycerides. The sequence is that of Basic phospholipase A2 pseudexin A chain from Pseudechis porphyriacus (Red-bellied black snake).